We begin with the raw amino-acid sequence, 434 residues long: 26S proteasome regulatory subunit RPN6 (434 aa).

Residue Ser-2 is modified to N-acetylserine. The PCI domain occupies 235 to 404; that stretch reads AFSYFFESFE…GWLYVYETPN (170 aa).

The protein belongs to the proteasome subunit S9 family. As to quaternary structure, component of the lid subcomplex of the 19S proteasome regulatory particle complex (also named PA700 complex). The 26S proteasome consists of a 20S proteasome core and two 19S regulatory subunits. N-acetylated by NAT1.

Component of the lid subcomplex of the 26S proteasome, a multiprotein complex involved in the ATP-dependent degradation of ubiquitinated proteins. In the complex, RPN6 is required for proteasome assembly. The chain is 26S proteasome regulatory subunit RPN6 (RPN6) from Saccharomyces cerevisiae (strain ATCC 204508 / S288c) (Baker's yeast).